Reading from the N-terminus, the 414-residue chain is Schlafen-like protein 1 (414 aa).

Residues 141 to 203 (LHHREQDDSG…ISQNRPSGVR (63 aa)) are disordered. The span at 154 to 185 (SHSPGPSPGPSPGPSPGFRRPPLPQLADPPPN) shows a compositional bias: pro residues. 268–275 (GVEDSGLV) contacts ATP. Positions 373–407 (RQKWTAELSKLEEKVDVLTLEKEQLQEQLRQRQTL) form a coiled coil.

The protein belongs to the Schlafen family. Subgroup I subfamily.

The sequence is that of Schlafen-like protein 1 (Slfnl1) from Rattus norvegicus (Rat).